A 344-amino-acid chain; its full sequence is UDP-3-O-acylglucosamine N-acyltransferase (344 aa).

His-244 (proton acceptor) is an active-site residue.

This sequence belongs to the transferase hexapeptide repeat family. LpxD subfamily. As to quaternary structure, homotrimer.

It carries out the reaction a UDP-3-O-[(3R)-3-hydroxyacyl]-alpha-D-glucosamine + a (3R)-hydroxyacyl-[ACP] = a UDP-2-N,3-O-bis[(3R)-3-hydroxyacyl]-alpha-D-glucosamine + holo-[ACP] + H(+). Its pathway is bacterial outer membrane biogenesis; LPS lipid A biosynthesis. Its function is as follows. Catalyzes the N-acylation of UDP-3-O-acylglucosamine using 3-hydroxyacyl-ACP as the acyl donor. Is involved in the biosynthesis of lipid A, a phosphorylated glycolipid that anchors the lipopolysaccharide to the outer membrane of the cell. In Pseudoalteromonas atlantica (strain T6c / ATCC BAA-1087), this protein is UDP-3-O-acylglucosamine N-acyltransferase.